We begin with the raw amino-acid sequence, 47 residues long: Protein PsbN (47 aa).

Residues Y9–F31 traverse the membrane as a helical segment.

This sequence belongs to the PsbN family.

It localises to the cellular thylakoid membrane. May play a role in photosystem I and II biogenesis. This chain is Protein PsbN, found in Prochlorococcus marinus (strain MIT 9303).